We begin with the raw amino-acid sequence, 155 residues long: Deoxyuridine 5'-triphosphate nucleotidohydrolase (155 aa).

Residues 74-76 (RSG), N87, and 91-93 (LID) each bind substrate.

It belongs to the dUTPase family. The cofactor is Mg(2+).

The catalysed reaction is dUTP + H2O = dUMP + diphosphate + H(+). The protein operates within pyrimidine metabolism; dUMP biosynthesis; dUMP from dCTP (dUTP route): step 2/2. This enzyme is involved in nucleotide metabolism: it produces dUMP, the immediate precursor of thymidine nucleotides and it decreases the intracellular concentration of dUTP so that uracil cannot be incorporated into DNA. The chain is Deoxyuridine 5'-triphosphate nucleotidohydrolase from Xanthomonas oryzae pv. oryzae (strain PXO99A).